The primary structure comprises 107 residues: Defensin-like protein 242 (107 aa).

An N-terminal signal peptide occupies residues 1-22 (MKVVAIFLASCVLFSLIPTHLS). 4 disulfide bridges follow: cysteine 45–cysteine 100, cysteine 55–cysteine 84, cysteine 65–cysteine 94, and cysteine 82–cysteine 96.

Belongs to the DEFL family.

The protein resides in the secreted. The sequence is that of Defensin-like protein 242 (SCRL10) from Arabidopsis thaliana (Mouse-ear cress).